A 327-amino-acid polypeptide reads, in one-letter code: Ribonucleoside-diphosphate reductase small chain (327 aa).

Residues D70, E101, and H104 each coordinate Fe cation. The active site involves Y108. Fe cation is bound by residues E164, E198, and H201.

Belongs to the ribonucleoside diphosphate reductase small chain family. In terms of assembly, heterotetramer composed of a homodimer of the large subunit (R1) and a homodimer of the small subunit (R2). Larger multisubunit protein complex are also active, composed of (R1)n(R2)n. Requires Fe cation as cofactor.

It carries out the reaction a 2'-deoxyribonucleoside 5'-diphosphate + [thioredoxin]-disulfide + H2O = a ribonucleoside 5'-diphosphate + [thioredoxin]-dithiol. In terms of biological role, ribonucleoside-diphosphate reductase holoenzyme provides the precursors necessary for viral DNA synthesis. Allows virus growth in non-dividing cells. Catalyzes the biosynthesis of deoxyribonucleotides from the corresponding ribonucleotides. This chain is Ribonucleoside-diphosphate reductase small chain, found in African swine fever virus (isolate Tick/South Africa/Pretoriuskop Pr4/1996) (ASFV).